Consider the following 1004-residue polypeptide: Putative helicase MOV-10 (1004 aa).

Lys-148 carries the post-translational modification N6-acetyllysine. Phosphothreonine is present on Thr-254. Phosphoserine is present on Ser-433. 525-532 (GPPGTGKT) serves as a coordination point for ATP. The DEAG box signature appears at 646–649 (DEAG). The interval 922–966 (NPLLLGHDPDWKTFLEFCKENGGYTGCPFPAKLDLQQGQDLLQGL) is interaction with AGO2 and APOBEC3G. Positions 966–1004 (LSKLSPSTSGPRRHQNLPQEREGEGGLPLQVEPEWRNEL) are disordered. Ser-970 bears the Phosphoserine mark.

This sequence belongs to the DNA2/NAM7 helicase family. SDE3 subfamily. As to quaternary structure, interacts with DICER1, AGO2, TARBP2, EIF6 and RPL7A (60S ribosome subunit); they form a large RNA-induced silencing complex (RISC). Interacts with APOBEC3G in an RNA-dependent manner. Interacts with TRIM71 (via NHL repeats) in an RNA-dependent manner. Interacts with both protein products of LIRE1, ORF1p and ORF2p. Interacts with TUT4 and, to a lesser extent, TUT7; the interactions are RNA-dependent. Interacts with AGO2, TNRC6B and UPF1; the interactions are direct and RNA-dependent. Interacts with FMR1; this interaction is direct, occurs in an RNA-dependent manner on polysomes and induces association of MOV10 with RNAs. Interacts with SHFL; the interaction increases in presence of RNA. Interacts with DHX34; the interaction is RNA-independent. Interacts with RBM46. In terms of processing, ubiquitinated by the DCX(DCAF12) complex that specifically recognizes the glutamate-leucine (Glu-Leu) degron at the C-terminus, leading to its degradation.

It is found in the cytoplasm. Its subcellular location is the P-body. It localises to the nucleus. The protein resides in the cytoplasmic ribonucleoprotein granule. The protein localises to the stress granule. The enzyme catalyses ATP + H2O = ADP + phosphate + H(+). Functionally, 5' to 3' RNA helicase that is involved in a number of cellular roles ranging from mRNA metabolism and translation, modulation of viral infectivity, inhibition of retrotransposition, or regulation of synaptic transmission. Plays an important role in innate antiviral immunity by promoting type I interferon production. Mechanistically, specifically uses IKKepsilon/IKBKE as the mediator kinase for IRF3 activation. Contributes to UPF1 mRNA target degradation by translocation along 3' UTRs. Required for microRNA (miRNA)-mediated gene silencing by the RNA-induced silencing complex (RISC). Required for both miRNA-mediated translational repression and miRNA-mediated cleavage of complementary mRNAs by RISC. In cooperation with FMR1, regulates miRNA-mediated translational repression by AGO2. Restricts retrotransposition of long interspersed element-1 (LINE-1) in cooperation with TUT4 and TUT7 counteracting the RNA chaperonne activity of L1RE1. Facilitates LINE-1 uridylation by TUT4 and TUT7. Required for embryonic viability and for normal central nervous system development and function. Plays two critical roles in early brain development: suppresses retroelements in the nucleus by directly inhibiting cDNA synthesis, while regulates cytoskeletal mRNAs to influence neurite outgrowth in the cytosol. May function as a messenger ribonucleoprotein (mRNP) clearance factor. The chain is Putative helicase MOV-10 (Mov10) from Mus musculus (Mouse).